The chain runs to 819 residues: Zinc finger protein 27 (819 aa).

One can recognise a KRAB domain in the interval 1-75; that stretch reads MDVTIDFSRE…KTLGAESCHD (75 aa). The tract at residues 93–123 is disordered; it reads PKRPRHWDPPEDEPKHSSDLQTHDESNGLKR. The segment covering 98 to 120 has biased composition (basic and acidic residues); the sequence is HWDPPEDEPKHSSDLQTHDESNG. 21 consecutive C2H2-type zinc fingers follow at residues 205-227, 233-255, 261-283, 289-311, 317-339, 345-367, 401-423, 429-451, 457-479, 485-507, 513-535, 541-563, 569-591, 597-619, 625-647, 653-675, 681-703, 709-731, 737-759, 765-787, and 793-815; these read YVCVECGKACSQTSEFLTHQKTH, YKCGDCGKSFFQVSSLFRHRRIH, YDCSHCGKGFSYNSDLRIHQKIH, HGCVDCGKAFTQKSTLRMHQKIH, YVCIECGQAFIQKTHLVAHRRIH, YACDGCGKAFLSKSQLLVHQRIH, SICAECGKAFTYRSELIIHQRTH, YQCGDCGKAFTQKSALTVHRRIH, YVCVKCGLAFVQRAHLDAHQVIH, YQCGHCGKFFTSKSQLHVHKRIH, YVCSNCGKAFANRSNLITHQKTH, YVCARCGKAFTQRSDLVTHQRIH, YGCSTCGKAFTQKSHLSIHEKIH, YGCRDCGKAFNQKSILIVHQKIH, HVCAECGRAFIRKSNFITHQRIH, YGCTDCGKSFTSKSQLLVHRPIH, YVCAECGKAFSGRSNLSKHQKTH, YACSECGKSFRQKSELITHHRIH, YDCGDCGKSFTKKSQLQVHQRIH, YRCAECGKAFTDRSNLNKHQTTH, and YKCVVCGKGFVQKSVLSIHENVH.

The protein belongs to the krueppel C2H2-type zinc-finger protein family.

The protein localises to the nucleus. Its function is as follows. May be involved in transcriptional regulation. In Mus musculus (Mouse), this protein is Zinc finger protein 27 (Zfp27).